The sequence spans 692 residues: uncharacterized protein (692 aa).

Response regulatory domains follow at residues 9-130 (RVLY…LRMC) and 139-255 (RILI…EYRM). A 4-aspartylphosphate mark is found at Asp-58 and Asp-188. A GGDEF domain is found at 299 to 432 (GVHGLVIIDV…GGNQAHVWSA (134 aa)). In terms of domain architecture, EAL spans 443 to 691 (ESVIKRLVST…SFDFQHMSHD (249 aa)).

This is an uncharacterized protein from Thiocystis violacea.